A 262-amino-acid polypeptide reads, in one-letter code: 5'-nucleotidase SurE (262 aa).

Asp8, Asp9, Ser40, and Asn92 together coordinate a divalent metal cation.

Belongs to the SurE nucleotidase family. A divalent metal cation serves as cofactor.

It is found in the cytoplasm. The enzyme catalyses a ribonucleoside 5'-phosphate + H2O = a ribonucleoside + phosphate. Its function is as follows. Nucleotidase that shows phosphatase activity on nucleoside 5'-monophosphates. In Xylella fastidiosa (strain M23), this protein is 5'-nucleotidase SurE.